The chain runs to 445 residues: Chromosome partition protein MukF (445 aa).

Positions 213–241 (LSETSSTLRELQDTLQAASDELQTQILDI) are leucine-zipper.

Belongs to the MukF family. Interacts, and probably forms a ternary complex, with MukE and MukB via its C-terminal region. The complex formation is stimulated by calcium or magnesium. It is required for an interaction between MukE and MukB.

It is found in the cytoplasm. Its subcellular location is the nucleoid. Involved in chromosome condensation, segregation and cell cycle progression. May participate in facilitating chromosome segregation by condensation DNA from both sides of a centrally located replisome during cell division. Not required for mini-F plasmid partitioning. Probably acts via its interaction with MukB and MukE. Overexpression results in anucleate cells. It has a calcium binding activity. The polypeptide is Chromosome partition protein MukF (Vibrio parahaemolyticus serotype O3:K6 (strain RIMD 2210633)).